The chain runs to 176 residues: Dual-action ribosomal maturation protein DarP (176 aa).

Belongs to the DarP family.

The protein localises to the cytoplasm. Functionally, member of a network of 50S ribosomal subunit biogenesis factors which assembles along the 30S-50S interface, preventing incorrect 23S rRNA structures from forming. Promotes peptidyl transferase center (PTC) maturation. This is Dual-action ribosomal maturation protein DarP from Aliivibrio fischeri (strain MJ11) (Vibrio fischeri).